Here is a 104-residue protein sequence, read N- to C-terminus: uncharacterized protein (104 aa).

This is an uncharacterized protein from Mycobacterium tuberculosis (strain ATCC 25618 / H37Rv).